A 692-amino-acid polypeptide reads, in one-letter code: Elongation factor G (692 aa).

Residues 8-282 (EKTRNIGIMA…AVVEYMPAPT (275 aa)) form the tr-type G domain. GTP-binding positions include 17–24 (AHIDAGKT), 81–85 (DTPGH), and 135–138 (NKMD). A disordered region spans residues 285–304 (PNIKGVHPETGEADERHSSD). Residues 290 to 304 (VHPETGEADERHSSD) show a composition bias toward basic and acidic residues.

Belongs to the TRAFAC class translation factor GTPase superfamily. Classic translation factor GTPase family. EF-G/EF-2 subfamily.

The protein resides in the cytoplasm. Its function is as follows. Catalyzes the GTP-dependent ribosomal translocation step during translation elongation. During this step, the ribosome changes from the pre-translocational (PRE) to the post-translocational (POST) state as the newly formed A-site-bound peptidyl-tRNA and P-site-bound deacylated tRNA move to the P and E sites, respectively. Catalyzes the coordinated movement of the two tRNA molecules, the mRNA and conformational changes in the ribosome. This is Elongation factor G from Desulfitobacterium hafniense (strain Y51).